Here is a 59-residue protein sequence, read N- to C-terminus: Large ribosomal subunit protein bL32 (59 aa).

This sequence belongs to the bacterial ribosomal protein bL32 family.

The sequence is that of Large ribosomal subunit protein bL32 from Thermodesulfovibrio yellowstonii (strain ATCC 51303 / DSM 11347 / YP87).